We begin with the raw amino-acid sequence, 564 residues long: Phosphoinositide phospholipase C 3 (564 aa).

The EF-hand domain maps to 19–54 (TRQPPVSIKRLFEAYSRNGKMSFDELLRFVSEVQGE). One can recognise a PI-PLC X-box domain in the interval 106–250 (HDMKAPLSHY…LKGKILISTK (145 aa)). Catalysis depends on residues histidine 121 and histidine 167. The 117-residue stretch at 296–412 (RDLIAIHAAN…GYVKKPRILL (117 aa)) folds into the PI-PLC Y-box domain. One can recognise a C2 domain in the interval 406–539 (KKPRILLDEH…KSGVRAVRLH (134 aa)). Residues aspartate 450, aspartate 456, aspartate 509, aspartate 511, and aspartate 517 each coordinate Ca(2+).

Ca(2+) is required as a cofactor. As to expression, expressed in leaves, roots and siliques, but not in flowers.

Its subcellular location is the cell membrane. The enzyme catalyses a 1,2-diacyl-sn-glycero-3-phospho-(1D-myo-inositol-4,5-bisphosphate) + H2O = 1D-myo-inositol 1,4,5-trisphosphate + a 1,2-diacyl-sn-glycerol + H(+). Functionally, the production of the second messenger molecules diacylglycerol (DAG) and inositol 1,4,5-trisphosphate (IP3) is mediated by activated phosphatidylinositol-specific phospholipase C enzymes. This is Phosphoinositide phospholipase C 3 (PLC3) from Arabidopsis thaliana (Mouse-ear cress).